Consider the following 443-residue polypeptide: Xaa-Pro dipeptidase (443 aa).

Residues Asp-246, Asp-257, His-339, Glu-384, and Glu-423 each coordinate Mn(2+).

The protein belongs to the peptidase M24B family. Bacterial-type prolidase subfamily. It depends on Mn(2+) as a cofactor.

The enzyme catalyses Xaa-L-Pro dipeptide + H2O = an L-alpha-amino acid + L-proline. Its function is as follows. Splits dipeptides with a prolyl residue in the C-terminal position. In Salmonella choleraesuis (strain SC-B67), this protein is Xaa-Pro dipeptidase.